Here is a 541-residue protein sequence, read N- to C-terminus: Light-independent protochlorophyllide reductase subunit B (541 aa).

Asp36 serves as a coordination point for [4Fe-4S] cluster. The active-site Proton donor is Asp287. 422–423 (GL) is a binding site for substrate.

The protein belongs to the ChlB/BchB/BchZ family. As to quaternary structure, protochlorophyllide reductase is composed of three subunits; BchL, BchN and BchB. Forms a heterotetramer of two BchB and two BchN subunits. The cofactor is [4Fe-4S] cluster.

The enzyme catalyses chlorophyllide a + oxidized 2[4Fe-4S]-[ferredoxin] + 2 ADP + 2 phosphate = protochlorophyllide a + reduced 2[4Fe-4S]-[ferredoxin] + 2 ATP + 2 H2O. Its pathway is porphyrin-containing compound metabolism; bacteriochlorophyll biosynthesis (light-independent). Functionally, component of the dark-operative protochlorophyllide reductase (DPOR) that uses Mg-ATP and reduced ferredoxin to reduce ring D of protochlorophyllide (Pchlide) to form chlorophyllide a (Chlide). This reaction is light-independent. The NB-protein (BchN-BchB) is the catalytic component of the complex. The polypeptide is Light-independent protochlorophyllide reductase subunit B (Rhodopseudomonas palustris (strain HaA2)).